Consider the following 1041-residue polypeptide: Isoleucine--tRNA ligase (1041 aa).

The short motif at 53–63 is the 'HIGH' region element; the sequence is PFANGLPHYGH. The 'KMSKS' region signature appears at 619–623; the sequence is KMSKS. Lys622 provides a ligand contact to ATP.

It belongs to the class-I aminoacyl-tRNA synthetase family. IleS type 2 subfamily. Monomer. The cofactor is Zn(2+).

Its subcellular location is the cytoplasm. It carries out the reaction tRNA(Ile) + L-isoleucine + ATP = L-isoleucyl-tRNA(Ile) + AMP + diphosphate. In terms of biological role, catalyzes the attachment of isoleucine to tRNA(Ile). As IleRS can inadvertently accommodate and process structurally similar amino acids such as valine, to avoid such errors it has two additional distinct tRNA(Ile)-dependent editing activities. One activity is designated as 'pretransfer' editing and involves the hydrolysis of activated Val-AMP. The other activity is designated 'posttransfer' editing and involves deacylation of mischarged Val-tRNA(Ile). The sequence is that of Isoleucine--tRNA ligase (ileS) from Mycobacterium tuberculosis (strain CDC 1551 / Oshkosh).